The following is a 54-amino-acid chain: Ovomucoid (54 aa).

The Kazal-like domain maps to valine 4 to cysteine 54. Cystine bridges form between cysteine 6/cysteine 36, cysteine 14/cysteine 33, and cysteine 22/cysteine 54. An N-linked (GlcNAc...) asparagine glycan is attached at asparagine 43.

The protein resides in the secreted. In Rhea americana (Greater rhea), this protein is Ovomucoid.